The primary structure comprises 293 residues: Transcriptional regulator ICP22 homolog (293 aa).

Disordered regions lie at residues 1-49 and 175-293; these read MPHG…QRID and RFLE…SARR. The segment covering 21–31 has biased composition (low complexity); the sequence is TPSTSPLIPSL. A compositionally biased stretch (acidic residues) spans 190–210; sequence EECDVSGDESPSEEEEEDEAS. The segment covering 272–281 has biased composition (basic residues); it reads AAKKRRKRQP. Residues 282 to 293 are compositionally biased toward basic and acidic residues; it reads PKGERPTKSARR.

This sequence belongs to the herpesviridae ICP22 family.

This Equus caballus (Horse) protein is Transcriptional regulator ICP22 homolog (IR4).